Reading from the N-terminus, the 570-residue chain is MSEKHPGPLVVEGKLSDAERMKRESNYLRGTIAEDLNDGLTGGFKGDNFLLIRFHGMYQQDDRDIRAERAEQKLEPRHAMLLRCRLPGGVITTKQWQVIDKFAADNTIYGSIRLTNRQTFQFHGILKKNVKPVHQMLHSVGLDALATANDMNRNVLCTSNPYESQLHSEAYEWAKKISEHLLPRTRAYAEIWLDQEKVATTDEEPILGQTYLPRKFKTTVVIPPQNDIDLHANDMSFVAIAENGKLVGFNLLVGGGLSIEHGNKKTYARTASEFGFLPLEHTLAVAEAVVTTQRDWGNRTDRKNAKTKYTLERVGLETFKAEVERRAGITFEPIRPYEFTGRGDRIGWVKGIDDNWHLTLFIENGRILDYPGRPLKSGLLEIAKIHQGEFRITANQNLIVASVPESQKMKVEKLALDYGLMNAVSPQRENSMACVSFPTCPLAMAEAERFLPSFVDKVEAVMAKHGVGNEHIVLRVTGCPNGCGRAMLAEIGLVGKAPGRYNLHLGGNRIGSRIPRMYKENITEPAILASLDELIGRWAKEREAGEGFGDFTVRAGIIRPVLDPARDFWE.

[4Fe-4S] cluster is bound by residues Cys-434, Cys-440, Cys-479, and Cys-483. Position 483 (Cys-483) interacts with siroheme.

Belongs to the nitrite and sulfite reductase 4Fe-4S domain family. In terms of assembly, alpha(8)-beta(8). The alpha component is a flavoprotein, the beta component is a hemoprotein. It depends on siroheme as a cofactor. Requires [4Fe-4S] cluster as cofactor.

It carries out the reaction hydrogen sulfide + 3 NADP(+) + 3 H2O = sulfite + 3 NADPH + 4 H(+). It functions in the pathway sulfur metabolism; hydrogen sulfide biosynthesis; hydrogen sulfide from sulfite (NADPH route): step 1/1. In terms of biological role, component of the sulfite reductase complex that catalyzes the 6-electron reduction of sulfite to sulfide. This is one of several activities required for the biosynthesis of L-cysteine from sulfate. The sequence is that of Sulfite reductase [NADPH] hemoprotein beta-component from Salmonella arizonae (strain ATCC BAA-731 / CDC346-86 / RSK2980).